We begin with the raw amino-acid sequence, 442 residues long: Chromosomal replication initiator protein DnaA (442 aa).

Residues 1 to 75 (MDAWPRCLER…GNGEVALAVG (75 aa)) are domain I, interacts with DnaA modulators. A domain II region spans residues 75–104 (GSRPRAPEPAPAAAAVPSAPQAAPMVPFAG). The interval 105–322 (NLDSHYTFAN…GALNTLVARA (218 aa)) is domain III, AAA+ region. ATP-binding residues include G150, G152, K153, and T154. Positions 323–442 (NFTGRSITVE…WEKLIRKLSE (120 aa)) are domain IV, binds dsDNA.

It belongs to the DnaA family. Oligomerizes as a right-handed, spiral filament on DNA at oriC.

Its subcellular location is the cytoplasm. Functionally, plays an essential role in the initiation and regulation of chromosomal replication. ATP-DnaA binds to the origin of replication (oriC) to initiate formation of the DNA replication initiation complex once per cell cycle. Binds the DnaA box (a 9 base pair repeat at the origin) and separates the double-stranded (ds)DNA. Forms a right-handed helical filament on oriC DNA; dsDNA binds to the exterior of the filament while single-stranded (ss)DNA is stabiized in the filament's interior. The ATP-DnaA-oriC complex binds and stabilizes one strand of the AT-rich DNA unwinding element (DUE), permitting loading of DNA polymerase. After initiation quickly degrades to an ADP-DnaA complex that is not apt for DNA replication. Binds acidic phospholipids. This chain is Chromosomal replication initiator protein DnaA, found in Xanthomonas euvesicatoria pv. vesicatoria (strain 85-10) (Xanthomonas campestris pv. vesicatoria).